Reading from the N-terminus, the 216-residue chain is Cytochrome c biogenesis ATP-binding export protein CcmA (216 aa).

In terms of domain architecture, ABC transporter spans 18–216 (LQVEGLAGRR…AHARTLEISA (199 aa)). 50-57 (GHNGSGKT) is a binding site for ATP.

This sequence belongs to the ABC transporter superfamily. CcmA exporter (TC 3.A.1.107) family. In terms of assembly, the complex is composed of two ATP-binding proteins (CcmA) and two transmembrane proteins (CcmB).

It localises to the cell inner membrane. It carries out the reaction heme b(in) + ATP + H2O = heme b(out) + ADP + phosphate + H(+). In terms of biological role, part of the ABC transporter complex CcmAB involved in the biogenesis of c-type cytochromes; once thought to export heme, this seems not to be the case, but its exact role is uncertain. Responsible for energy coupling to the transport system. This Nitrosococcus oceani (strain ATCC 19707 / BCRC 17464 / JCM 30415 / NCIMB 11848 / C-107) protein is Cytochrome c biogenesis ATP-binding export protein CcmA.